A 592-amino-acid chain; its full sequence is 1,4-alpha-glucan branching enzyme GlgB 2 (592 aa).

D274 functions as the Nucleophile in the catalytic mechanism. E327 functions as the Proton donor in the catalytic mechanism.

This sequence belongs to the glycosyl hydrolase 13 family. GlgB subfamily. Monomer.

It catalyses the reaction Transfers a segment of a (1-&gt;4)-alpha-D-glucan chain to a primary hydroxy group in a similar glucan chain.. Its pathway is glycan biosynthesis; glycogen biosynthesis. Catalyzes the formation of the alpha-1,6-glucosidic linkages in glycogen by scission of a 1,4-alpha-linked oligosaccharide from growing alpha-1,4-glucan chains and the subsequent attachment of the oligosaccharide to the alpha-1,6 position. This chain is 1,4-alpha-glucan branching enzyme GlgB 2, found in Streptomyces avermitilis (strain ATCC 31267 / DSM 46492 / JCM 5070 / NBRC 14893 / NCIMB 12804 / NRRL 8165 / MA-4680).